The following is a 253-amino-acid chain: Thiamine import ATP-binding protein ThiQ (253 aa).

In terms of domain architecture, ABC transporter spans 8–236 (VRLDKVSFSY…AGPEAFRRYI (229 aa)). 38 to 45 (GPSGSGKS) lines the ATP pocket.

This sequence belongs to the ABC transporter superfamily. Thiamine importer (TC 3.A.1.19.1) family. As to quaternary structure, the complex is composed of two ATP-binding proteins (ThiQ), two transmembrane proteins (ThiP) and a solute-binding protein (ThiB).

The protein resides in the cell inner membrane. The enzyme catalyses thiamine(out) + ATP + H2O = thiamine(in) + ADP + phosphate + H(+). Its function is as follows. Part of the ABC transporter complex ThiBPQ involved in thiamine import. Responsible for energy coupling to the transport system. The sequence is that of Thiamine import ATP-binding protein ThiQ from Mesorhizobium japonicum (strain LMG 29417 / CECT 9101 / MAFF 303099) (Mesorhizobium loti (strain MAFF 303099)).